The chain runs to 835 residues: MKVLALRHSVAQVYADTQTYLHDDSKDEYENAFLISNLTAHNILYLNYSLKTLKILNKSGIAAVETQSPDELFALIRCNFTYDYENNIVYLHDYSYYTNNEIRTDQHWITKTDIIDYLLPGWKLTYVGYNGKNTRGHYNFSFSCQNAATDDDIIVEYIYSNELDFQNFMLRKIKERMTTSLPIARLSNRVFRDKLFPSIANMHKRVINVGPRNESMFTFLNFPTIKQFSNGAYIVKHTIKLKQEKWLGKRVSQFDIGQYKNMLNVVTTIYYYYNLYHSKPIIYMLGSAPSYWIYNVKQYSDFTFETWDPVDTPYSTTHHKELFFDKDVMKLKDDSVLYIDIRTDRKNMDWKEWRKVVEQQTVSNLNIAYNYLSTGKAKVCCVKLTAMDLELPITAKLLHHPTTEVRSEFYAILDVWDIITIKRFIPKGVFYAFINNITTENVFIQPPFKLKASPTDYIVALYALSNDFNSRQDVINLINKQKQSLITVRINNTFKDEPKVNFKNIYDWTFLPTDFELKDSVITSYDGCLGMFGLSLSLSSKPTGNNHLFIINGTDKYYKLDQYANHMGISRRSHQIRFSESATSYSGYIFRDLSNNNFNLIGTNVENSVSGHVYNALIYYRYNYAFDLKRWIYLHSIGKVAVEGGRYYEHAPIELIYACRSAREFAILQDDLTVLRYANEIEGYINKVYSITYADDPNYFIGITFNNIPYEYDVKVPHLTLGVLFISDNMIDEVVAVLKEMKTELFKTEISTSYNYMLFDNVYVANASGVLSTYFKLYNMFYRNHITFGQSRMFIPHITLSFSNKRTIRIESTRLKINSIYLRKIRGETVFDMSE.

Residues 171–245 (RKIKERMTTS…KHTIKLKQEK (75 aa)) form an N7-methyltransferase activity region. Positions 246-428 (WLGKRVSQFD…ITIKRFIPKG (183 aa)) are 2'-O-methyltransferase activity. The segment at 429–555 (VFYAFINNIT…NHLFIINGTD (127 aa)) is N7-methyltransferase activity. Residues 556–692 (KYYKLDQYAN…GYINKVYSIT (137 aa)) are GTase/RTPase activity. The segment at 693–835 (YADDPNYFIG…RGETVFDMSE (143 aa)) is 2'-5'-phosphodiesterase activity. Active-site for 2'-5'-phosphodiesterase activity residues include His-718, Thr-720, His-797, and Thr-799.

This sequence belongs to the rotavirus VP3 family. Interacts with VP1. Interacts with VP2.

It localises to the virion. It carries out the reaction a 5'-end diphospho-ribonucleoside in mRNA + GTP + H(+) = a 5'-end (5'-triphosphoguanosine)-ribonucleoside in mRNA + diphosphate. The enzyme catalyses a 5'-end (5'-triphosphoguanosine)-ribonucleoside in mRNA + S-adenosyl-L-methionine = a 5'-end (N(7)-methyl 5'-triphosphoguanosine)-ribonucleoside in mRNA + S-adenosyl-L-homocysteine. The catalysed reaction is 5'-triphosphoadenylyl-(2'-&gt;5')-adenylyl-(2'-&gt;5')-adenosine + 2 H2O = 2 AMP + ATP + 2 H(+). In terms of biological role, multifunctional enzyme involved in mRNA capping. Catalyzes the formation of the 5' cap structure on the viral plus-strand transcripts. Specifically binds to GTP and displays guanylyltransferase and methyltransferase activities. Has affinity for ssRNA but not for dsRNA. Capping activity is non-specific and caps RNAs that initiate with either a G or an A residue. Together with VP1 polymerase, forms a VP1-VP3 complex positioned near the channels situated at each of the five-fold vertices of the core. Following infection, the outermost layer of the virus is lost, leaving a double-layered particle (DLP) made up of the core and VP6 shell. VP1 then catalyzes the transcription of fully conservative plus-strand genomic RNAs that are capped by VP3 and extruded through the DLP's channels into the cytoplasm where they function as mRNAs for translation of viral proteins. DLPs probably have an RNA triphosphatase activity as well, whereas open cores do not. Its function is as follows. Counteracts the host innate immune response thanks to its phosphodiesterase that degrades the 5'-triphosphorylated, 2'-5' linked adenylate oligomers produced by the host cell IFN-inducible 2',5'-oligoadenylate synthetase (OAS). The host RNaseL is therefore not activated. This Rotavirus A (strain RVA/Human/Japan/KU/1995/G1P1A[8]) (RV-A) protein is Protein VP3.